Reading from the N-terminus, the 626-residue chain is Putative Xaa-Pro dipeptidyl-peptidase (626 aa).

Residues Ser231, Asp348, and His379 each act as charge relay system in the active site.

It belongs to the peptidase S15 family.

It carries out the reaction Hydrolyzes Xaa-Pro-|- bonds to release unblocked, N-terminal dipeptides from substrates including Ala-Pro-|-p-nitroanilide and (sequentially) Tyr-Pro-|-Phe-Pro-|-Gly-Pro-|-Ile.. The protein is Putative Xaa-Pro dipeptidyl-peptidase of Rhodopirellula baltica (strain DSM 10527 / NCIMB 13988 / SH1).